The sequence spans 255 residues: MSMEDPFFVVKGEVQKAVNTAQGLFQRWTELLQGPSAATREEIDWTTNELRNNLRSIEWDLEDLDETISIVEANPRKFNLDATELSIRKAFITSTRQIVRDMKDQMSASSVQALAERKNRQALLGDSSSQSWNAGVADRYGRLDRELQLANSHFIEEQQAQQQLIVEQQDEQLELVSGSIGVLKNMSQRIGGELEEQAVMLDDFSHELESTQSRLDNVMKKLAKVSHMTSDRRQWCAIAILFAVLVVVLILFLVL.

The residue at position 2 (serine 2) is an N-acetylserine. The residue at position 2 (serine 2) is a Phosphoserine. The interval 2-168 (SMEDPFFVVK…QAQQQLIVEQ (167 aa)) is required for interaction with VPS51. The Cytoplasmic portion of the chain corresponds to 2 to 234 (SMEDPFFVVK…VSHMTSDRRQ (233 aa)). Positions 41–74 (EEIDWTTNELRNNLRSIEWDLEDLDETISIVEAN) form a coiled coil. Phosphoserine is present on residues serine 129 and serine 152. One can recognise a t-SNARE coiled-coil homology domain in the interval 163–225 (QLIVEQQDEQ…DNVMKKLAKV (63 aa)). A helical; Anchor for type IV membrane protein transmembrane segment spans residues 235–255 (WCAIAILFAVLVVVLILFLVL).

It belongs to the syntaxin family. In terms of assembly, identified in a complex containing STX6, STX12 and VAMP4. This complex also includes VTI1A. Binds EEA1. Interacts with VPS45A and GOPC. Interacts with MARCHF2; the interaction promotes MARCHF2-mediated ubiquitination and degradation of CFTR. Interacts with MARCHF3. Interacts with BLTP3B (via C-terminal coiled-coil domain). Interacts with BAIAP3; this interaction is increased in the presence of calcium. Interacts with VPS13B.

It localises to the golgi apparatus membrane. It is found in the golgi apparatus. The protein resides in the trans-Golgi network membrane. Its subcellular location is the recycling endosome membrane. SNARE promoting movement of transport vesicles to target membranes. Targets endosomes to the trans-Golgi network, and may therefore function in retrograde trafficking. Together with SNARE STX12, promotes movement of vesicles from endosomes to the cell membrane, and may therefore function in the endocytic recycling pathway. This is Syntaxin-6 (Stx6) from Mus musculus (Mouse).